We begin with the raw amino-acid sequence, 67 residues long: Kappa-scoloptoxin(04)-Ssd1b (67 aa).

An N-terminal signal peptide occupies residues 1-24; the sequence is MKKTCVVSVFLVLLLLKFHDLSMG. A propeptide spanning residues 25–36 is cleaved from the precursor; sequence EEISPLKKVARR. Intrachain disulfides connect cysteine 44/cysteine 55 and cysteine 49/cysteine 62.

As to expression, expressed by the venom gland.

The protein localises to the secreted. This is Kappa-scoloptoxin(04)-Ssd1b from Scolopendra dehaani (Thai centipede).